Reading from the N-terminus, the 449-residue chain is Putative F-box/FBD/LRR-repeat protein At5g62970 (449 aa).

The F-box domain occupies 2–50 (DKISGFSDDELLVKILSFLPFKFAITTSVLSKQWKFLWMRVPKLEYDED). LRR repeat units lie at residues 27 to 52 (TTSV…EDSM), 81 to 107 (GHRM…RLKF), 158 to 185 (TLKL…HLER), 186 to 211 (VTYG…VVEL), 252 to 279 (YFKL…NITA), and 328 to 354 (IHNA…EFDE). Positions 368–418 (FWNQPNSVPQCLLSTLQTFEWSGYPGSVQGKDLATYILRKSRQLKIATISI) constitute an FBD domain.

The chain is Putative F-box/FBD/LRR-repeat protein At5g62970 from Arabidopsis thaliana (Mouse-ear cress).